The following is a 386-amino-acid chain: Ovalbumin (386 aa).

N-acetylglycine is present on G2. S69 carries the post-translational modification Phosphoserine. The cysteines at positions 74 and 121 are disulfide-linked. N-linked (GlcNAc...) asparagine glycosylation is present at N293. Position 345 is a phosphoserine (S345).

Belongs to the serpin family. Ov-serpin subfamily. Post-translationally, the N-terminus is blocked.

It is found in the secreted. Its function is as follows. Storage protein of egg white. Lacks protease inhibitory activity. In Dromaius novaehollandiae (Emu), this protein is Ovalbumin (SERPINB14).